The following is a 97-amino-acid chain: Cobalt transport protein CbiN (97 aa).

2 helical membrane passes run V6–L26 and S68–Y88.

The protein belongs to the CbiN family. Forms an energy-coupling factor (ECF) transporter complex composed of an ATP-binding protein (A component, CbiO), a transmembrane protein (T component, CbiQ) and 2 possible substrate-capture proteins (S components, CbiM and CbiN) of unknown stoichimetry.

It localises to the cell membrane. Its pathway is cofactor biosynthesis; adenosylcobalamin biosynthesis. Its function is as follows. Part of the energy-coupling factor (ECF) transporter complex CbiMNOQ involved in cobalt import. The protein is Cobalt transport protein CbiN of Methanococcus maripaludis (strain C5 / ATCC BAA-1333).